The primary structure comprises 169 residues: Ribosome maturation factor RimM (169 aa).

A PRC barrel domain is found at 97-169 (EDEYYWADLV…TITADWGLDY (73 aa)).

Belongs to the RimM family. As to quaternary structure, binds ribosomal protein uS19.

The protein resides in the cytoplasm. An accessory protein needed during the final step in the assembly of 30S ribosomal subunit, possibly for assembly of the head region. Essential for efficient processing of 16S rRNA. May be needed both before and after RbfA during the maturation of 16S rRNA. It has affinity for free ribosomal 30S subunits but not for 70S ribosomes. The chain is Ribosome maturation factor RimM from Neisseria gonorrhoeae (strain ATCC 700825 / FA 1090).